The following is a 154-amino-acid chain: Homeobox protein engrailed (154 aa).

Positions 37–96 (EKRPRTAFSASQLQRLKQEFQQSNYLTEQRRRSLAKELTLSESQIKIWFQNKRAKIKKAS) form a DNA-binding region, homeobox. The disordered stretch occupies residues 127–154 (KLLNGQNTSGDCSRSDYTSDSDGDSLTH). Over residues 129–144 (LNGQNTSGDCSRSDYT) the composition is skewed to polar residues. Positions 145-154 (SDSDGDSLTH) are enriched in acidic residues.

It belongs to the engrailed homeobox family.

It is found in the nucleus. The chain is Homeobox protein engrailed (EN) from Tripneustes gratilla (Hawaian sea urchin).